The sequence spans 276 residues: Bifunctional protein FolD (276 aa).

NADP(+) is bound by residues Asn157–Ser159, Ser182, and Ile223.

The protein belongs to the tetrahydrofolate dehydrogenase/cyclohydrolase family. In terms of assembly, homodimer.

It catalyses the reaction (6R)-5,10-methylene-5,6,7,8-tetrahydrofolate + NADP(+) = (6R)-5,10-methenyltetrahydrofolate + NADPH. It carries out the reaction (6R)-5,10-methenyltetrahydrofolate + H2O = (6R)-10-formyltetrahydrofolate + H(+). It participates in one-carbon metabolism; tetrahydrofolate interconversion. Functionally, catalyzes the oxidation of 5,10-methylenetetrahydrofolate to 5,10-methenyltetrahydrofolate and then the hydrolysis of 5,10-methenyltetrahydrofolate to 10-formyltetrahydrofolate. This chain is Bifunctional protein FolD, found in Thermoplasma acidophilum (strain ATCC 25905 / DSM 1728 / JCM 9062 / NBRC 15155 / AMRC-C165).